A 349-amino-acid chain; its full sequence is Hydroxymethylglutaryl-CoA synthase (349 aa).

(3S)-3-hydroxy-3-methylglutaryl-CoA is bound by residues Asp29 and Ala30. Glu81 functions as the Proton donor/acceptor in the catalytic mechanism. (3S)-3-hydroxy-3-methylglutaryl-CoA is bound by residues Cys113 and Thr154. Cys113 serves as the catalytic Acyl-thioester intermediate. Arg202 is a CoA binding site. (3S)-3-hydroxy-3-methylglutaryl-CoA contacts are provided by Thr204 and His237. The active-site Proton donor/acceptor is the His237. Position 242 (Lys242) interacts with CoA. Residues Arg246, Asn269, and Ser299 each coordinate (3S)-3-hydroxy-3-methylglutaryl-CoA.

This sequence belongs to the thiolase-like superfamily. Archaeal HMG-CoA synthase family. As to quaternary structure, interacts with acetoacetyl-CoA thiolase that catalyzes the precedent step in the pathway and with a DUF35 protein. The acetoacetyl-CoA thiolase/HMG-CoA synthase complex channels the intermediate via a fused CoA-binding site, which allows for efficient coupling of the endergonic thiolase reaction with the exergonic HMGCS reaction.

The enzyme catalyses acetoacetyl-CoA + acetyl-CoA + H2O = (3S)-3-hydroxy-3-methylglutaryl-CoA + CoA + H(+). It functions in the pathway metabolic intermediate biosynthesis; (R)-mevalonate biosynthesis; (R)-mevalonate from acetyl-CoA: step 2/3. Its function is as follows. Catalyzes the condensation of acetyl-CoA with acetoacetyl-CoA to form 3-hydroxy-3-methylglutaryl-CoA (HMG-CoA). Functions in the mevalonate (MVA) pathway leading to isopentenyl diphosphate (IPP), a key precursor for the biosynthesis of isoprenoid compounds that are building blocks of archaeal membrane lipids. This Methanococcoides burtonii (strain DSM 6242 / NBRC 107633 / OCM 468 / ACE-M) protein is Hydroxymethylglutaryl-CoA synthase.